A 218-amino-acid polypeptide reads, in one-letter code: 3,4-dihydroxy-2-butanone 4-phosphate synthase (218 aa).

Residues 38-39 (RE), aspartate 43, 151-155 (RRGHT), and glutamate 175 each bind D-ribulose 5-phosphate. Glutamate 39 is a Mg(2+) binding site. Histidine 154 provides a ligand contact to Mg(2+).

Belongs to the DHBP synthase family. Homodimer. The cofactor is Mg(2+). Requires Mn(2+) as cofactor.

It carries out the reaction D-ribulose 5-phosphate = (2S)-2-hydroxy-3-oxobutyl phosphate + formate + H(+). It participates in cofactor biosynthesis; riboflavin biosynthesis; 2-hydroxy-3-oxobutyl phosphate from D-ribulose 5-phosphate: step 1/1. Its function is as follows. Catalyzes the conversion of D-ribulose 5-phosphate to formate and 3,4-dihydroxy-2-butanone 4-phosphate. The sequence is that of 3,4-dihydroxy-2-butanone 4-phosphate synthase from Vibrio vulnificus (strain CMCP6).